We begin with the raw amino-acid sequence, 508 residues long: Kinesin light chain 3 (508 aa).

The interval 1-20 (MSVQVAAPGSTGLGPERLNP) is disordered. The stretch at 88–150 (LLALSAHVSV…EEEKSHLQFL (63 aa)) forms a coiled coil. Positions 154 to 197 (RQYDPPEESQRPESPPRRDSLASLFPSEEEEKKGPEAAGAAAAQ) are disordered. The span at 161–173 (ESQRPESPPRRDS) shows a compositional bias: basic and acidic residues. Ser-173 bears the Phosphoserine mark. 5 TPR repeats span residues 207–240 (LRTL…LERS), 249–282 (ATML…REQT), 291–324 (AATL…REKV), 333–366 (AKQL…YEAL), and 375–408 (AKTK…EALP). Residues 409–441 (APLGAPQGGTAGDTQQQVLRRSSSFSKLRESIR) are disordered. Positions 420-434 (GDTQQQVLRRSSSFS) are enriched in polar residues. Position 467 is a phosphoserine (Ser-467). A disordered region spans residues 486–508 (LSTRHLSEAPRTLSISTQDLSPR). The segment covering 498–508 (LSISTQDLSPR) has biased composition (polar residues). Phosphothreonine is present on Thr-502. Ser-506 carries the phosphoserine modification.

The protein belongs to the kinesin light chain family. As to quaternary structure, oligomer composed of two heavy chains and two light chains. Associates with microtubulin in an ATP-dependent manner. Interacts with KIF5C. Interacts with ODF1. Interacts with LRGUK. Interacts with VDAC2. In terms of tissue distribution, expressed in postmeiotic male germ cells (at protein level). Expressed in the testes (at protein level). Expressed in spleen, intestine, brain and ovary.

It localises to the cytoplasm. The protein resides in the cytoskeleton. The protein localises to the mitochondrion. In terms of biological role, kinesin is a microtubule-associated force-producing protein that may play a role in organelle transport. Plays a role during spermiogenesis in the development of the sperm tail midpiece and in the normal function of spermatozoa. May play a role in the formation of the mitochondrial sheath formation in the developing spermatid midpiece. This chain is Kinesin light chain 3 (Klc3), found in Mus musculus (Mouse).